A 271-amino-acid polypeptide reads, in one-letter code: Delta(7)-sterol-C5(6)-desaturase (271 aa).

The next 2 membrane-spanning stretches (helical) occupy residues 44–64 (IGGV…IYHL) and 120–140 (VGWL…EFGI). The region spanning 130–259 (AIYLVIVEFG…TIWMDWMFGT (130 aa)) is the Fatty acid hydroxylase domain. Positions 144–148 (HMELH) match the Histidine box-1 motif. The Histidine box-2 motif lies at 158–162 (HATHH). The chain crosses the membrane as a helical span at residues 190–210 (HVVALLLVPMHFSTHIALIFL). Residues 235–239 (HTIHH) carry the Histidine box-3 motif.

This sequence belongs to the sterol desaturase family. Requires Fe cation as cofactor.

The protein resides in the endoplasmic reticulum membrane. It carries out the reaction a Delta(7)-sterol + 2 Fe(II)-[cytochrome b5] + O2 + 2 H(+) = a Delta(5),Delta(7)-sterol + 2 Fe(III)-[cytochrome b5] + 2 H2O. In terms of biological role, involved in the biosynthesis of sitosterol and campesterol. This chain is Delta(7)-sterol-C5(6)-desaturase, found in Nicotiana tabacum (Common tobacco).